Here is a 317-residue protein sequence, read N- to C-terminus: Protoheme IX farnesyltransferase (317 aa).

The next 9 membrane-spanning stretches (helical) occupy residues 43–63, 65–85, 119–139, 140–160, 168–188, 195–215, 238–258, 261–281, and 292–312; these read PISV…AGAT, PVSG…CAGA, ALYW…NLNP, IAWI…SLWL, IVIG…AVTG, VLIA…LAIF, LNWL…IYFV, WGLV…ALSV, and AWVL…SMMV.

Belongs to the UbiA prenyltransferase family. Protoheme IX farnesyltransferase subfamily. In terms of assembly, interacts with CtaA.

Its subcellular location is the cell membrane. The enzyme catalyses heme b + (2E,6E)-farnesyl diphosphate + H2O = Fe(II)-heme o + diphosphate. It participates in porphyrin-containing compound metabolism; heme O biosynthesis; heme O from protoheme: step 1/1. Converts heme B (protoheme IX) to heme O by substitution of the vinyl group on carbon 2 of heme B porphyrin ring with a hydroxyethyl farnesyl side group. The protein is Protoheme IX farnesyltransferase of Desulforudis audaxviator (strain MP104C).